Consider the following 575-residue polypeptide: DNA mismatch repair protein MutL (575 aa).

Belongs to the DNA mismatch repair MutL/HexB family.

This protein is involved in the repair of mismatches in DNA. It is required for dam-dependent methyl-directed DNA mismatch repair. May act as a 'molecular matchmaker', a protein that promotes the formation of a stable complex between two or more DNA-binding proteins in an ATP-dependent manner without itself being part of a final effector complex. The polypeptide is DNA mismatch repair protein MutL (Dictyoglomus thermophilum (strain ATCC 35947 / DSM 3960 / H-6-12)).